The chain runs to 283 residues: Cyclin-C (283 aa).

The region spanning 46 to 144 (NVIQALGEHL…ILECEFYLLE (99 aa)) is the Cyclin N-terminal domain. Positions 252–283 (TILSKMPKPKPPPNSEGEQGPNGSQNSSYSQS) are disordered. Residues 272 to 283 (PNGSQNSSYSQS) show a composition bias toward polar residues.

The protein belongs to the cyclin family. Cyclin C subfamily. Component of the Mediator complex. The cylin/CDK pair formed by CCNC/CDK8 also associates with the large subunit of RNA polymerase II.

Its subcellular location is the nucleus. Component of the Mediator complex, a coactivator involved in regulated gene transcription of nearly all RNA polymerase II-dependent genes. Mediator functions as a bridge to convey information from gene-specific regulatory proteins to the basal RNA polymerase II transcription machinery. Mediator is recruited to promoters by direct interactions with regulatory proteins and serves as a scaffold for the assembly of a functional preinitiation complex with RNA polymerase II and the general transcription factors. Binds to and activates cyclin-dependent kinase CDK8 that phosphorylates the CTD (C-terminal domain) of the large subunit of RNA polymerase II (RNAp II), which may inhibit the formation of a transcription initiation complex. In Gallus gallus (Chicken), this protein is Cyclin-C (CCNC).